Reading from the N-terminus, the 264-residue chain is uncharacterized protein (264 aa).

6 residues coordinate a divalent metal cation: His-7, His-9, Glu-102, His-138, His-163, and Asp-213.

The protein belongs to the metallo-dependent hydrolases superfamily. TatD-type hydrolase family. The cofactor is a divalent metal cation.

This is an uncharacterized protein from Buchnera aphidicola subsp. Acyrthosiphon pisum (strain APS) (Acyrthosiphon pisum symbiotic bacterium).